Reading from the N-terminus, the 89-residue chain is Cell division protein FtsL (89 aa).

Over 1–22 (MIDRKHYHLVGSIGKDILNNGK) the chain is Cytoplasmic. Residues 23–40 (LPALLLIAVLASSSLVVI) form a helical membrane-spanning segment. The Periplasmic portion of the chain corresponds to 41–89 (TTYQTRRLTVEREQLLLEQNILDIEWRNLILEDNVISDQSRFEFVATEQ).

It belongs to the FtsL family. Part of a complex composed of FtsB, FtsL and FtsQ.

The protein resides in the cell inner membrane. In terms of biological role, essential cell division protein. May link together the upstream cell division proteins, which are predominantly cytoplasmic, with the downstream cell division proteins, which are predominantly periplasmic. The chain is Cell division protein FtsL from Moranella endobia (strain PCIT).